Consider the following 726-residue polypeptide: uncharacterized protein (726 aa).

Catalysis depends on charge relay system residues serine 583 and histidine 698.

It belongs to the peptidase S9B family.

This is an uncharacterized protein from Sinorhizobium fredii (strain NBRC 101917 / NGR234).